A 450-amino-acid polypeptide reads, in one-letter code: 3-phosphoshikimate 1-carboxyvinyltransferase (450 aa).

Lys28, Ser29, and Arg33 together coordinate 3-phosphoshikimate. Lys28 lines the phosphoenolpyruvate pocket. Residues Gly100 and Arg128 each coordinate phosphoenolpyruvate. 3-phosphoshikimate is bound by residues Ser173, Gln175, Asp326, and Lys353. Gln175 is a phosphoenolpyruvate binding site. Catalysis depends on Asp326, which acts as the Proton acceptor. Phosphoenolpyruvate is bound by residues Arg357 and Arg402.

Belongs to the EPSP synthase family. In terms of assembly, monomer.

It localises to the cytoplasm. The catalysed reaction is 3-phosphoshikimate + phosphoenolpyruvate = 5-O-(1-carboxyvinyl)-3-phosphoshikimate + phosphate. It functions in the pathway metabolic intermediate biosynthesis; chorismate biosynthesis; chorismate from D-erythrose 4-phosphate and phosphoenolpyruvate: step 6/7. In terms of biological role, catalyzes the transfer of the enolpyruvyl moiety of phosphoenolpyruvate (PEP) to the 5-hydroxyl of shikimate-3-phosphate (S3P) to produce enolpyruvyl shikimate-3-phosphate and inorganic phosphate. The chain is 3-phosphoshikimate 1-carboxyvinyltransferase from Brucella canis (strain ATCC 23365 / NCTC 10854 / RM-666).